A 377-amino-acid polypeptide reads, in one-letter code: Glutamate 5-kinase (377 aa).

Residue lysine 20 participates in ATP binding. Substrate is bound by residues serine 60, aspartate 147, and asparagine 159. 179 to 180 (TD) provides a ligand contact to ATP. The PUA domain occupies 285-363 (AGRLVIDAGA…DKVHQVLGEA (79 aa)).

This sequence belongs to the glutamate 5-kinase family.

Its subcellular location is the cytoplasm. The enzyme catalyses L-glutamate + ATP = L-glutamyl 5-phosphate + ADP. It functions in the pathway amino-acid biosynthesis; L-proline biosynthesis; L-glutamate 5-semialdehyde from L-glutamate: step 1/2. Its function is as follows. Catalyzes the transfer of a phosphate group to glutamate to form L-glutamate 5-phosphate. The sequence is that of Glutamate 5-kinase from Acinetobacter baylyi (strain ATCC 33305 / BD413 / ADP1).